A 391-amino-acid polypeptide reads, in one-letter code: uncharacterized protein (391 aa).

It belongs to the mimivirus L17x/L18x family.

This is an uncharacterized protein from Acanthamoeba polyphaga (Amoeba).